The following is a 154-amino-acid chain: Ribonuclease HI (154 aa).

One can recognise an RNase H type-1 domain in the interval Met-1 to Glu-142. Mg(2+)-binding residues include Asp-10, Glu-48, Asp-70, and Asp-134.

The protein belongs to the RNase H family. As to quaternary structure, monomer. Mg(2+) is required as a cofactor.

It is found in the cytoplasm. It catalyses the reaction Endonucleolytic cleavage to 5'-phosphomonoester.. Its function is as follows. Endonuclease that specifically degrades the RNA of RNA-DNA hybrids. The polypeptide is Ribonuclease HI (rnhA) (Haemophilus influenzae (strain ATCC 51907 / DSM 11121 / KW20 / Rd)).